The sequence spans 308 residues: S-adenosylmethionine-dependent nucleotide dehydratase (308 aa).

A Radical SAM core domain is found at 7 to 253; that stretch reads SIQELVINFH…WQSYLMINPE (247 aa). C21, C25, and C28 together coordinate [4Fe-4S] cluster.

This sequence belongs to the radical SAM superfamily. Viperin family. [4Fe-4S] cluster is required as a cofactor.

It carries out the reaction CTP + AH2 + S-adenosyl-L-methionine = 3'-deoxy-3',4'-didehydro-CTP + 5'-deoxyadenosine + L-methionine + A + H2O + H(+). It catalyses the reaction GTP + AH2 + S-adenosyl-L-methionine = 3'-deoxy-3',4'-didehydro-GTP + 5'-deoxyadenosine + L-methionine + A + H2O + H(+). The catalysed reaction is UTP + AH2 + S-adenosyl-L-methionine = 3'-deoxy-3',4'-didehydro-UTP + 5'-deoxyadenosine + L-methionine + A + H2O + H(+). Functionally, expression of pVip58 in E.coli (strain MG1655) confers resistance to phages lambda, P1 and T7; delays culture collapse upon infection with T7. Catalyzes the conversion of cytidine triphosphate (CTP) to 3'-deoxy-3',4'-didehydro-CTP (ddhCTP), guanosine triphosphate (GTP) to 3'-deoxy-3',4'-didehydro-GTP (ddhGTP) and uridine triphosphate (UTP) to 3'-deoxy-3',4'-didehydro-UTP (ddhUTP), probably via a SAM-dependent radical mechanism. The modified nucleotide represses transcription from T7 RNA polymerase-directed genes (possibly by acting as chain terminators), strongly suggesting these nucleotides block viral polymerase transcription. This Pseudoalteromonas ulvae protein is S-adenosylmethionine-dependent nucleotide dehydratase.